The chain runs to 406 residues: Phosphopentomutase (406 aa).

Positions 10, 305, 310, 346, 347, and 358 each coordinate Mn(2+).

This sequence belongs to the phosphopentomutase family. Mn(2+) serves as cofactor.

The protein resides in the cytoplasm. The catalysed reaction is 2-deoxy-alpha-D-ribose 1-phosphate = 2-deoxy-D-ribose 5-phosphate. The enzyme catalyses alpha-D-ribose 1-phosphate = D-ribose 5-phosphate. Its pathway is carbohydrate degradation; 2-deoxy-D-ribose 1-phosphate degradation; D-glyceraldehyde 3-phosphate and acetaldehyde from 2-deoxy-alpha-D-ribose 1-phosphate: step 1/2. In terms of biological role, isomerase that catalyzes the conversion of deoxy-ribose 1-phosphate (dRib-1-P) and ribose 1-phosphate (Rib-1-P) to deoxy-ribose 5-phosphate (dRib-5-P) and ribose 5-phosphate (Rib-5-P), respectively. The protein is Phosphopentomutase of Sinorhizobium fredii (strain NBRC 101917 / NGR234).